The sequence spans 84 residues: Translational regulator CsrA (84 aa).

Belongs to the CsrA/RsmA family. Homodimer; the beta-strands of each monomer intercalate to form a hydrophobic core, while the alpha-helices form wings that extend away from the core.

The protein localises to the cytoplasm. Its function is as follows. A translational regulator that binds mRNA to regulate translation initiation and/or mRNA stability. Usually binds in the 5'-UTR at or near the Shine-Dalgarno sequence preventing ribosome-binding, thus repressing translation. Its main target seems to be the major flagellin gene, while its function is anatagonized by FliW. This Leptospira borgpetersenii serovar Hardjo-bovis (strain JB197) protein is Translational regulator CsrA.